Consider the following 195-residue polypeptide: Acireductone dioxygenase 2 (195 aa).

The Fe(2+) site is built by H94, H96, E100, and H139. The Ni(2+) site is built by H94, H96, E100, and H139.

The protein belongs to the acireductone dioxygenase (ARD) family. Requires Fe(2+) as cofactor. Ni(2+) serves as cofactor.

It is found in the cytoplasm. It localises to the nucleus. The catalysed reaction is 1,2-dihydroxy-5-(methylsulfanyl)pent-1-en-3-one + O2 = 4-methylsulfanyl-2-oxobutanoate + formate + 2 H(+). The enzyme catalyses 1,2-dihydroxy-5-(methylsulfanyl)pent-1-en-3-one + O2 = 3-(methylsulfanyl)propanoate + CO + formate + 2 H(+). It participates in amino-acid biosynthesis; L-methionine biosynthesis via salvage pathway; L-methionine from S-methyl-5-thio-alpha-D-ribose 1-phosphate: step 5/6. In terms of biological role, catalyzes 2 different reactions between oxygen and the acireductone 1,2-dihydroxy-3-keto-5-methylthiopentene (DHK-MTPene) depending upon the metal bound in the active site. Fe-containing acireductone dioxygenase (Fe-ARD) produces formate and 2-keto-4-methylthiobutyrate (KMTB), the alpha-ketoacid precursor of methionine in the methionine recycle pathway. Ni-containing acireductone dioxygenase (Ni-ARD) produces methylthiopropionate, carbon monoxide and formate, and does not lie on the methionine recycle pathway. This chain is Acireductone dioxygenase 2, found in Physcomitrium patens (Spreading-leaved earth moss).